We begin with the raw amino-acid sequence, 216 residues long: MFKIFGSKAQTFKPKKSIKKGTKQYELHQKIKETLGSGDLTDAIKLPPDETLFEWLSVNTIDFFNQSNLLYGSITEFCTPKYCPSMSAGPQYEFLWADGKEIKKPIRVSAPAYVDYLMTWIQVQLDDEDIFPTKPTEDMPKNFLPTIKAIFKRLFRVYAHIYYSHMDRVSVLGVEAHLNTAFRHFYLFIKEFNLVDKKEMLPLQNIIDKINARKDI.

The Zn(2+) site is built by C78, C83, H160, and H165.

The protein belongs to the MOB1/phocein family.

This is MOB kinase activator-like 1 homolog C (mobC) from Dictyostelium discoideum (Social amoeba).